Consider the following 141-residue polypeptide: Large ribosomal subunit protein uL11 (141 aa).

The protein belongs to the universal ribosomal protein uL11 family. As to quaternary structure, part of the ribosomal stalk of the 50S ribosomal subunit. Interacts with L10 and the large rRNA to form the base of the stalk. L10 forms an elongated spine to which L12 dimers bind in a sequential fashion forming a multimeric L10(L12)X complex. In terms of processing, one or more lysine residues are methylated.

In terms of biological role, forms part of the ribosomal stalk which helps the ribosome interact with GTP-bound translation factors. This is Large ribosomal subunit protein uL11 from Thermomicrobium roseum (strain ATCC 27502 / DSM 5159 / P-2).